Reading from the N-terminus, the 647-residue chain is C2H2 finger domain transcription factor USV101 (647 aa).

Residues 1-10 show a composition bias toward basic and acidic residues; sequence MSFVAPDDRA. The interval 1-132 is disordered; it reads MSFVAPDDRA…ATGYTPDGQP (132 aa). Composition is skewed to polar residues over residues 27-54 and 66-84; these read ESTS…SPNQ and SSHS…STAY. The segment covering 97-122 has biased composition (low complexity); sequence PTQQQQQQQSEQHIPSPPSSSNRPPS. 2 C2H2-type zinc fingers span residues 144 to 169 and 175 to 197; these read FRCR…VRKH and FPCH…ATVH. The tract at residues 220 to 647 is disordered; the sequence is QRASREQRRR…VKQQDDKKTQ (428 aa). A compositionally biased stretch (basic and acidic residues) spans 222–248; that stretch reads ASREQRRRGEVVEVPKGAVERRRETRK. Positions 249 to 259 are enriched in low complexity; it reads AQAAAAQAAAA. Polar residues predominate over residues 261–278; sequence GHSQQNSPYAQYHESQWN. 3 stretches are compositionally biased toward low complexity: residues 312–327, 404–414, and 421–434; these read SSSA…YDSA, HGAYPPHDAAA, and GYYH…GSYP. A compositionally biased stretch (basic and acidic residues) spans 504 to 515; sequence RAEDDFGKDDRK. Residues 521–540 are compositionally biased toward low complexity; sequence SPSNSQVPDSSTAAHANGAH. Residues 628 to 647 show a composition bias toward basic and acidic residues; the sequence is VDKEREKKEEVKQQDDKKTQ.

It localises to the nucleus. Its subcellular location is the cytoplasm. In terms of biological role, transcription factor that promotes pheromone gene expression, which results in a subsequent increase in cell fusion. Also promotes production of melanin and capsule and thereby is required for full virulence. The protein is C2H2 finger domain transcription factor USV101 of Cryptococcus neoformans var. grubii serotype A (strain H99 / ATCC 208821 / CBS 10515 / FGSC 9487) (Filobasidiella neoformans var. grubii).